The primary structure comprises 218 residues: Antifreeze protein Maxi (218 aa).

Positions 1–23 (MALSLFTVGQFIFLFWTISITEA) are cleaved as a signal peptide.

The protein belongs to the type-I AFP family. As to quaternary structure, homodimer. Detected in blood serum (at protein level). Detected in liver.

Its subcellular location is the secreted. Functionally, contributes to protect fish blood from freezing at subzero sea water temperatures. Lowers the blood freezing point by about 1.1 degrees at a concentration of 0.1 mg/ml, and by about 1.5 degrees at a concentration of 0.2 mg/ml. Binds to nascent ice crystals and prevents further growth. In Pseudopleuronectes americanus (Winter flounder), this protein is Antifreeze protein Maxi.